A 215-amino-acid chain; its full sequence is Cytochrome b6 (215 aa).

A helical transmembrane segment spans residues 32-52; sequence IFYCLGGITFTLFLVQVATGF. Heme c is bound at residue Cys-35. 2 residues coordinate heme b: His-86 and His-100. The next 3 membrane-spanning stretches (helical) occupy residues 90–110, 116–136, and 186–206; these read ASMM…TGGF, LTWI…VTGY, and LHTF…FLMI. Heme b is bound by residues His-187 and His-202.

The protein belongs to the cytochrome b family. PetB subfamily. As to quaternary structure, the 4 large subunits of the cytochrome b6-f complex are cytochrome b6, subunit IV (17 kDa polypeptide, PetD), cytochrome f and the Rieske protein, while the 4 small subunits are PetG, PetL, PetM and PetN. The complex functions as a dimer. The cofactor is heme b. Heme c is required as a cofactor.

The protein localises to the plastid. Its subcellular location is the chloroplast thylakoid membrane. Its function is as follows. Component of the cytochrome b6-f complex, which mediates electron transfer between photosystem II (PSII) and photosystem I (PSI), cyclic electron flow around PSI, and state transitions. The polypeptide is Cytochrome b6 (Tupiella akineta (Green alga)).